Reading from the N-terminus, the 213-residue chain is Pyrrolidone-carboxylate peptidase (213 aa).

Active-site residues include Glu78, Cys141, and His165.

It belongs to the peptidase C15 family. As to quaternary structure, homotetramer.

The protein resides in the cytoplasm. The catalysed reaction is Release of an N-terminal pyroglutamyl group from a polypeptide, the second amino acid generally not being Pro.. In terms of biological role, removes 5-oxoproline from various penultimate amino acid residues except L-proline. This chain is Pyrrolidone-carboxylate peptidase, found in Clostridium perfringens (strain ATCC 13124 / DSM 756 / JCM 1290 / NCIMB 6125 / NCTC 8237 / Type A).